A 710-amino-acid polypeptide reads, in one-letter code: Methionine--tRNA ligase (710 aa).

A 'HIGH' region motif is present at residues 16 to 26 (PYANGAFHIGH). Residues Cys147, Cys150, Cys160, and Cys163 each contribute to the Zn(2+) site. Residues 350–354 (KMSKS) carry the 'KMSKS' region motif. Lys353 is a binding site for ATP. A tRNA-binding domain is found at 604–710 (DFAKIDLRIA…PGAEPGMRVG (107 aa)).

This sequence belongs to the class-I aminoacyl-tRNA synthetase family. MetG type 1 subfamily. As to quaternary structure, homodimer. Zn(2+) serves as cofactor.

It is found in the cytoplasm. The catalysed reaction is tRNA(Met) + L-methionine + ATP = L-methionyl-tRNA(Met) + AMP + diphosphate. Functionally, is required not only for elongation of protein synthesis but also for the initiation of all mRNA translation through initiator tRNA(fMet) aminoacylation. This Herminiimonas arsenicoxydans protein is Methionine--tRNA ligase.